A 139-amino-acid chain; its full sequence is Large ribosomal subunit protein uL14 (139 aa).

Belongs to the universal ribosomal protein uL14 family.

The protein is Large ribosomal subunit protein uL14 (RPL23) of Syntrichia ruralis (Great hairy screw-moss).